The sequence spans 297 residues: Acetaldehyde dehydrogenase (297 aa).

C128 acts as the Acyl-thioester intermediate in catalysis. NAD(+) is bound by residues 159–167 and N272; that span reads SAGPGTRQN.

This sequence belongs to the acetaldehyde dehydrogenase family.

It carries out the reaction acetaldehyde + NAD(+) + CoA = acetyl-CoA + NADH + H(+). This chain is Acetaldehyde dehydrogenase, found in Desulfitobacterium hafniense (strain DSM 10664 / DCB-2).